Here is a 572-residue protein sequence, read N- to C-terminus: Alpha-1D adrenergic receptor (572 aa).

A disordered region spans residues 1–77 (MTFRDLLSVS…SAGEPGSAGA (77 aa)). At 1 to 95 (MTFRDLLSVS…AVGGLVVSAQ (95 aa)) the chain is on the extracellular side. Gly residues-rich tracts occupy residues 23-33 (SSAGGGGGSAG) and 42-61 (AVGG…GAGS). N-linked (GlcNAc...) asparagine glycans are attached at residues asparagine 65 and asparagine 82. Residues 96–121 (GVGVGVFLAAFILMAVAGNLLVILSV) traverse the membrane as a helical segment. Residues 122–133 (ACNRHLQTVTNY) are Cytoplasmic-facing. Residues 134–159 (FIVNLAVADLLLSATVLPFSATMEVL) traverse the membrane as a helical segment. Over 160 to 169 (GFWAFGRAFC) the chain is Extracellular. A helical transmembrane segment spans residues 170–192 (DVWAAVDVLCCTASILSLCTISV). Residues 193–213 (DRYVGVRHSLKYPAIMTERKA) are Cytoplasmic-facing. The chain crosses the membrane as a helical span at residues 214-238 (AAILALLWVVALVVSVGPLLGWKEP). Over 239–251 (VPPDERFCGITEE) the chain is Extracellular. Residues 252–275 (AGYAVFSSVCSFYLPMAVIVVMYC) form a helical membrane-spanning segment. The Cytoplasmic segment spans residues 276-348 (RVYVVARSTT…KFSREKKAAK (73 aa)). A helical transmembrane segment spans residues 349–373 (TLAIVVGVFVLCWFPFFFVLPLGSL). At 374 to 380 (FPQLKPS) the chain is on the extracellular side. A helical transmembrane segment spans residues 381-405 (EGVFKVIFWLGYFNSCVNPLIYPCS). Residues 406–572 (SREFKRAFLR…DYSNLRETDI (167 aa)) lie on the Cytoplasmic side of the membrane. Cysteine 419 carries S-palmitoyl cysteine lipidation. The tract at residues 444 to 488 (GLRQDCAPSSGDAPPGAPLALTALPDPDPEPPGTPEMQAPVASRR) is disordered. The segment covering 450 to 468 (APSSGDAPPGAPLALTALP) has biased composition (low complexity).

The protein belongs to the G-protein coupled receptor 1 family. Adrenergic receptor subfamily. ADRA1D sub-subfamily. In terms of assembly, interacts with FLNA (via filamin repeat 21); increases PKA-mediated phosphorylation of FLNA. In terms of processing, palmitoylated. Palmitoylation by ZDHHC21 may increase the expression of the receptor and regulate downstream signaling.

It localises to the cell membrane. Functionally, this alpha-adrenergic receptor mediates its effect through the influx of extracellular calcium. The protein is Alpha-1D adrenergic receptor (ADRA1D) of Homo sapiens (Human).